Consider the following 259-residue polypeptide: Glucosamine-6-phosphate deaminase (259 aa).

The Proton acceptor; for enolization step role is filled by Asp66. Catalysis depends on Asp135, which acts as the For ring-opening step. His137 serves as the catalytic Proton acceptor; for ring-opening step. The For ring-opening step role is filled by Glu142.

Belongs to the glucosamine/galactosamine-6-phosphate isomerase family. NagB subfamily.

The catalysed reaction is alpha-D-glucosamine 6-phosphate + H2O = beta-D-fructose 6-phosphate + NH4(+). It functions in the pathway amino-sugar metabolism; N-acetylneuraminate degradation; D-fructose 6-phosphate from N-acetylneuraminate: step 5/5. Its function is as follows. Catalyzes the reversible isomerization-deamination of glucosamine 6-phosphate (GlcN6P) to form fructose 6-phosphate (Fru6P) and ammonium ion. The protein is Glucosamine-6-phosphate deaminase of Pseudarthrobacter chlorophenolicus (strain ATCC 700700 / DSM 12829 / CIP 107037 / JCM 12360 / KCTC 9906 / NCIMB 13794 / A6) (Arthrobacter chlorophenolicus).